Here is a 173-residue protein sequence, read N- to C-terminus: Mesencephalic astrocyte-derived neurotrophic factor homolog (173 aa).

The first 22 residues, 1-22, serve as a signal peptide directing secretion; sequence MKTAHLVVVVCFLAGALQTAVA. Cystine bridges form between cysteine 28-cysteine 114, cysteine 31-cysteine 103, cysteine 61-cysteine 72, and cysteine 148-cysteine 151.

Belongs to the ARMET family.

The protein resides in the secreted. Functionally, required during the maturation of the embryonic nervous system for maintenance of neuronal and cuticular connectivity. Essential for maintenance of dopaminergic neurons and dopamine levels. This is Mesencephalic astrocyte-derived neurotrophic factor homolog from Drosophila ananassae (Fruit fly).